The chain runs to 154 residues: Xanthine-guanine phosphoribosyltransferase (154 aa).

5-phospho-alpha-D-ribose 1-diphosphate is bound by residues 37–38 (RG), arginine 69, and 88–96 (EDLVDSGDT). Arginine 69 contributes to the GMP binding site. Aspartate 89 is a binding site for Mg(2+). Aspartate 92 and isoleucine 135 together coordinate guanine. Xanthine-binding residues include aspartate 92 and isoleucine 135. Residues 92–96 (DSGDT) and 134–135 (WI) each bind GMP.

This sequence belongs to the purine/pyrimidine phosphoribosyltransferase family. XGPT subfamily. As to quaternary structure, homotetramer. Requires Mg(2+) as cofactor.

It localises to the cell inner membrane. The catalysed reaction is GMP + diphosphate = guanine + 5-phospho-alpha-D-ribose 1-diphosphate. It carries out the reaction XMP + diphosphate = xanthine + 5-phospho-alpha-D-ribose 1-diphosphate. The enzyme catalyses IMP + diphosphate = hypoxanthine + 5-phospho-alpha-D-ribose 1-diphosphate. It functions in the pathway purine metabolism; GMP biosynthesis via salvage pathway; GMP from guanine: step 1/1. It participates in purine metabolism; XMP biosynthesis via salvage pathway; XMP from xanthine: step 1/1. Its function is as follows. Purine salvage pathway enzyme that catalyzes the transfer of the ribosyl-5-phosphate group from 5-phospho-alpha-D-ribose 1-diphosphate (PRPP) to the N9 position of the 6-oxopurines guanine and xanthine to form the corresponding ribonucleotides GMP (guanosine 5'-monophosphate) and XMP (xanthosine 5'-monophosphate), with the release of PPi. To a lesser extent, also acts on hypoxanthine. The polypeptide is Xanthine-guanine phosphoribosyltransferase (Vibrio campbellii (strain ATCC BAA-1116)).